Reading from the N-terminus, the 128-residue chain is MAAIHKIGRRKCAVARVYVSEGTGVITVNKKAFATYFPTATLQYKVLQPMSMTENVTNYDVKVNVYGGGSTGQAEAVRMALARVMCEVGEGNRAILKPEGLLTRDPRMVERKKFGQKKARKRFQFSKR.

Belongs to the universal ribosomal protein uS9 family.

The sequence is that of Small ribosomal subunit protein uS9 from Flavobacterium psychrophilum (strain ATCC 49511 / DSM 21280 / CIP 103535 / JIP02/86).